A 264-amino-acid chain; its full sequence is MSQVRSDKPFTLAGRTYQSRLLVGTGKYKDMDETRDAIAASGAEIVTVAVRRTNIGQNPGEPNLLDVISPEQYTILPNTAGCYDAAEAVRTCRLARELLDGHKLVKLEVLADQKTLFPNVIETIKAAEILVKDGFDVMVYTSDDPIIARQLAEIGCIAVMPLAGLIGSGLGICNPYNLRIILEEAKVPVLVDAGVGTASDATIAMELGCEAVLLNSAIAHAQDPILMARAMKHAVEAGRLAYLAGRMPKKLYASASSPLDGLIK.

The Schiff-base intermediate with DXP role is filled by Lys106. 1-deoxy-D-xylulose 5-phosphate-binding positions include Gly167, 193-194 (AG), and 215-216 (NS).

The protein belongs to the ThiG family. Homotetramer. Forms heterodimers with either ThiH or ThiS.

Its subcellular location is the cytoplasm. The catalysed reaction is [ThiS sulfur-carrier protein]-C-terminal-Gly-aminoethanethioate + 2-iminoacetate + 1-deoxy-D-xylulose 5-phosphate = [ThiS sulfur-carrier protein]-C-terminal Gly-Gly + 2-[(2R,5Z)-2-carboxy-4-methylthiazol-5(2H)-ylidene]ethyl phosphate + 2 H2O + H(+). The protein operates within cofactor biosynthesis; thiamine diphosphate biosynthesis. Functionally, catalyzes the rearrangement of 1-deoxy-D-xylulose 5-phosphate (DXP) to produce the thiazole phosphate moiety of thiamine. Sulfur is provided by the thiocarboxylate moiety of the carrier protein ThiS. In vitro, sulfur can be provided by H(2)S. The chain is Thiazole synthase from Ectopseudomonas mendocina (strain ymp) (Pseudomonas mendocina).